The primary structure comprises 228 residues: Small ribosomal subunit protein uS2 (228 aa).

It belongs to the universal ribosomal protein uS2 family.

The chain is Small ribosomal subunit protein uS2 from Buchnera aphidicola subsp. Baizongia pistaciae (strain Bp).